The following is a 565-amino-acid chain: Phospholipase B-like protein C (565 aa).

Residues 1–21 (MNKIIILISLFLNFLFGYVVC) form the signal peptide. N-linked (GlcNAc...) asparagine glycosylation is found at Asn53, Asn84, Asn118, Asn200, Asn201, Asn211, Asn266, Asn302, Asn406, and Asn485.

It belongs to the phospholipase B-like family.

It is found in the secreted. In terms of biological role, probable phospholipase. The polypeptide is Phospholipase B-like protein C (plbC) (Dictyostelium discoideum (Social amoeba)).